The chain runs to 626 residues: Basic helix-loop-helix ARNT-like protein 1 (626 aa).

The segment at 1–60 (MADQRMDISSTISDFMSPGPTDLLSSSLGTSGVDCNRKRKGSSTDYQESMDTDKDDPHGR) is disordered. S17 bears the Phosphoserine; by GSK3-beta mark. The segment covering 17–32 (SPGPTDLLSSSLGTSG) has biased composition (low complexity). T21 carries the phosphothreonine; by GSK3-beta modification. Residues 36–41 (NRKRKG) carry the Nuclear localization signal motif. The segment covering 51-60 (DTDKDDPHGR) has biased composition (basic and acidic residues). Residues 72-125 (NAREAHSQIEKRRRDKMNSFIDELASLVPTCNAMSRKLDKLTVLRMAVQHMKTL) form the bHLH domain. Residue S78 is modified to Phosphoserine. The residue at position 90 (S90) is a Phosphoserine; by CK2. The short motif at 142-152 (LSDDELKHLIL) is the Nuclear export signal 1 element. Residues 143–215 (SDDELKHLIL…EQLSSSDTAP (73 aa)) enclose the PAS 1 domain. Residue K252 forms a Glycyl lysine isopeptide (Lys-Gly) (interchain with G-Cter in SUMO2 and SUMO3) linkage. Residue K259 forms a Glycyl lysine isopeptide (Lys-Gly) (interchain with G-Cter in SUMO2) linkage. Residues 326-396 (PQPVNGEIRV…ECHRQVLQTR (71 aa)) form the PAS 2 domain. The Nuclear export signal 2 signature appears at 361 to 369 (LAYLPQELL). In terms of domain architecture, PAC spans 401–444 (TNCYKFKIKDGSFITLRSRWFSFMNPWTKEVEYIVSTNTVVLAN). Disordered regions lie at residues 458 to 493 (ASPHSMDSMLPSGEGGPKRTHPTVPGIPGGTRAGAG) and 511 to 595 (GSSP…SPSN). The span at 484 to 493 (IPGGTRAGAG) shows a compositional bias: gly residues. An interaction with CIART region spans residues 508–588 (RIRGSSPSSC…IGIDMIDNDQ (81 aa)). A compositionally biased stretch (low complexity) spans 511–521 (GSSPSSCGSSP). Residue K538 is modified to N6-acetyllysine.

As to quaternary structure, component of the circadian clock oscillator which includes the CRY1/2 proteins, CLOCK or NPAS2,BMAL1 or BMAL2, CSNK1D and/or CSNK1E, TIMELESS and the PER1/2/3 proteins. Forms a heterodimer with CLOCK. The CLOCK-BMAL1 heterodimer is required for E-box-dependent transactivation, for CLOCK nuclear translocation and degradation, and, for phosphorylation of both CLOCK and BMAL1. Part of a nuclear complex which also includes RACK1 and PRKCA; RACK1 and PRKCA are recruited to the complex in a circadian manner. Interacts with NPAS2. Interacts with EZH2. Interacts with SUMO3. Interacts with SIRT1. Interacts with AHR. Interacts with ID1, ID2 and ID3. Interacts with DDX4. Interacts with OGT. Interacts with EED and SUZ12. Interacts with MTA1. Interacts with CIART. Interacts with HSP90. Interacts with KAT2B and EP300. Interacts with BHLHE40/DEC1 and BHLHE41/DEC2. Interacts with RELB and the interaction is enhanced in the presence of CLOCK. Interacts with PER1, PER2, CRY1 and CRY2 and this interaction requires a translocation to the nucleus. Interaction of the CLOCK-BMAL1 heterodimer with PER or CRY inhibits transcription activation. Interaction of the CLOCK-BMAL1 with CRY1 is independent of DNA but with PER2 is off DNA. The CLOCK-BMAL1 heterodimer interacts with GSK3B. Interacts with KDM5A. Interacts with KMT2A; in a circadian manner. Interacts with UBE3A. Interacts with PRKCG. Interacts with MAGEL2. Interacts with NCOA2. Interacts with THRAP3. The CLOCK-BMAL1 heterodimer interacts with PASD1. Interacts with PASD1. Interacts with USP9X. Interacts with PIWIL2 (via PIWI domain). Interacts with HDAC3. Interacts with HNF4A. Ubiquitinated, leading to its proteasomal degradation. Deubiquitinated by USP9X. Post-translationally, O-glycosylated; contains O-GlcNAc. O-glycosylation by OGT prevents protein degradation by inhibiting ubiquitination. It also stabilizes the CLOCK-BMAL1 heterodimer thereby increasing CLOCK-BMAL1-mediated transcription of genes in the negative loop of the circadian clock such as PER1/2/3 and CRY1/2. In terms of processing, acetylated on Lys-538 by CLOCK during the repression phase of the circadian cycle. Acetylation facilitates recruitment of CRY1 protein and initiates the repression phase of the circadian cycle. Acetylated at Lys-538 by KAT5 during the activation phase of the cycle, leading to recruitment of the positive transcription elongation factor b (P-TEFb) and BRD4, followed by productive elongation of circadian transcripts. Deacetylated by SIRT1, which may result in decreased protein stability. Phosphorylated upon dimerization with CLOCK. Phosphorylation enhances the transcriptional activity, alters the subcellular localization and decreases the stability of the CLOCK-BMAL1 heterodimer by promoting its degradation. Phosphorylation shows circadian variations in the liver with a peak between CT10 to CT14. Phosphorylation at Ser-90 by CK2 is essential for its nuclear localization, its interaction with CLOCK and controls CLOCK nuclear entry. Dephosphorylation at Ser-78 is important for dimerization with CLOCK and transcriptional activity. Post-translationally, sumoylated on Lys-259 upon dimerization with CLOCK. Predominantly conjugated to poly-SUMO2/3 rather than SUMO1 and the level of these conjugates undergo rhythmic variation, peaking at CT9-CT12. Sumoylation localizes it exclusively to the PML body and promotes its ubiquitination in the PML body, ubiquitin-dependent proteasomal degradation and the transcriptional activity of the CLOCK-BMAL1 heterodimer. In terms of processing, undergoes lysosome-mediated degradation in a time-dependent manner in the liver. In terms of tissue distribution, hair follicles (at protein level). Highly expressed in the adult brain, skeletal muscle and heart.

It is found in the nucleus. It localises to the cytoplasm. The protein localises to the PML body. Its activity is regulated as follows. There is conflicting data about the effect of NAD cofactors on activity. PubMed:11441146 suggests that the redox state of the cell can modulate the transcriptional activity of the CLOCK-BMAL1 heterodimer; NADH and NADPH enhance the DNA-binding activity of the heterodimer. PubMed:23229515 reports that NADH and NADPH have no significant effect on DNA-binding activity of the CLOCK-BMAL1 heterodimer. Its function is as follows. Transcriptional activator which forms a core component of the circadian clock. The circadian clock, an internal time-keeping system, regulates various physiological processes through the generation of approximately 24 hour circadian rhythms in gene expression, which are translated into rhythms in metabolism and behavior. It is derived from the Latin roots 'circa' (about) and 'diem' (day) and acts as an important regulator of a wide array of physiological functions including metabolism, sleep, body temperature, blood pressure, endocrine, immune, cardiovascular, and renal function. Consists of two major components: the central clock, residing in the suprachiasmatic nucleus (SCN) of the brain, and the peripheral clocks that are present in nearly every tissue and organ system. Both the central and peripheral clocks can be reset by environmental cues, also known as Zeitgebers (German for 'timegivers'). The predominant Zeitgeber for the central clock is light, which is sensed by retina and signals directly to the SCN. The central clock entrains the peripheral clocks through neuronal and hormonal signals, body temperature and feeding-related cues, aligning all clocks with the external light/dark cycle. Circadian rhythms allow an organism to achieve temporal homeostasis with its environment at the molecular level by regulating gene expression to create a peak of protein expression once every 24 hours to control when a particular physiological process is most active with respect to the solar day. Transcription and translation of core clock components (CLOCK, NPAS2, BMAL1, BMAL2, PER1, PER2, PER3, CRY1 and CRY2) plays a critical role in rhythm generation, whereas delays imposed by post-translational modifications (PTMs) are important for determining the period (tau) of the rhythms (tau refers to the period of a rhythm and is the length, in time, of one complete cycle). A diurnal rhythm is synchronized with the day/night cycle, while the ultradian and infradian rhythms have a period shorter and longer than 24 hours, respectively. Disruptions in the circadian rhythms contribute to the pathology of cardiovascular diseases, cancer, metabolic syndromes and aging. A transcription/translation feedback loop (TTFL) forms the core of the molecular circadian clock mechanism. Transcription factors, CLOCK or NPAS2 and BMAL1 or BMAL2, form the positive limb of the feedback loop, act in the form of a heterodimer and activate the transcription of core clock genes and clock-controlled genes (involved in key metabolic processes), harboring E-box elements (5'-CACGTG-3') within their promoters. The core clock genes: PER1/2/3 and CRY1/2 which are transcriptional repressors form the negative limb of the feedback loop and interact with the CLOCK|NPAS2-BMAL1|BMAL2 heterodimer inhibiting its activity and thereby negatively regulating their own expression. This heterodimer also activates nuclear receptors NR1D1/2 and RORA/B/G, which form a second feedback loop and which activate and repress BMAL1 transcription, respectively. BMAL1 positively regulates myogenesis and negatively regulates adipogenesis via the transcriptional control of the genes of the canonical Wnt signaling pathway. Plays a role in normal pancreatic beta-cell function; regulates glucose-stimulated insulin secretion via the regulation of antioxidant genes NFE2L2/NRF2 and its targets SESN2, PRDX3, CCLC and CCLM. Negatively regulates the mTORC1 signaling pathway; regulates the expression of MTOR and DEPTOR. Controls diurnal oscillations of Ly6C inflammatory monocytes; rhythmic recruitment of the PRC2 complex imparts diurnal variation to chemokine expression that is necessary to sustain Ly6C monocyte rhythms. Regulates the expression of HSD3B2, STAR, PTGS2, CYP11A1, CYP19A1 and LHCGR in the ovary and also the genes involved in hair growth. Plays an important role in adult hippocampal neurogenesis by regulating the timely entry of neural stem/progenitor cells (NSPCs) into the cell cycle and the number of cell divisions that take place prior to cell-cycle exit. Regulates the circadian expression of CIART and KLF11. The CLOCK-BMAL1 heterodimer regulates the circadian expression of SERPINE1/PAI1, VWF, B3, CCRN4L/NOC, NAMPT, DBP, MYOD1, PPARGC1A, PPARGC1B, SIRT1, GYS2, F7, NGFR, GNRHR, BHLHE40/DEC1, ATF4, MTA1, KLF10 and also genes implicated in glucose and lipid metabolism. Promotes rhythmic chromatin opening, regulating the DNA accessibility of other transcription factors. The NPAS2-BMAL1 heterodimer positively regulates the expression of MAOA, F7 and LDHA and modulates the circadian rhythm of daytime contrast sensitivity by regulating the rhythmic expression of adenylate cyclase type 1 (ADCY1) in the retina. The preferred binding motif for the CLOCK-BMAL1 heterodimer is 5'-CACGTGA-3', which contains a flanking adenine nucleotide at the 3-prime end of the canonical 6-nucleotide E-box sequence. CLOCK specifically binds to the half-site 5'-CAC-3', while BMAL1 binds to the half-site 5'-GTGA-3'. The CLOCK-BMAL1 heterodimer also recognizes the non-canonical E-box motifs 5'-AACGTGA-3' and 5'-CATGTGA-3'. Essential for the rhythmic interaction of CLOCK with ASS1 and plays a critical role in positively regulating CLOCK-mediated acetylation of ASS1. Plays a role in protecting against lethal sepsis by limiting the expression of immune checkpoint protein CD274 in macrophages in a PKM2-dependent manner. Regulates the diurnal rhythms of skeletal muscle metabolism via transcriptional activation of genes promoting triglyceride synthesis (DGAT2) and metabolic efficiency (COQ10B). In terms of biological role, (Microbial infection) Regulates SARS coronavirus-2/SARS-CoV-2 entry and replication in lung epithelial cells probably through the post-transcriptional regulation of ACE2 and interferon-stimulated gene expression. This is Basic helix-loop-helix ARNT-like protein 1 from Homo sapiens (Human).